Consider the following 924-residue polypeptide: Ubiquitin carboxyl-terminal hydrolase 15 (924 aa).

Zn(2+)-binding residues include Cys130, Cys133, Cys141, Cys144, Cys150, Cys154, His163, and Cys167. The MYND-type zinc-finger motif lies at 130–167 (CARCFGPAKTRCSRCKSVRYCSGKCQIIHWRVAHKDEC). The segment covering 226-236 (DITPQINTQGR) has biased composition (polar residues). Disordered regions lie at residues 226–301 (DITP…VDSS) and 317–366 (SHKH…TSKK). Residues 247 to 256 (ANRESCRRDS) are compositionally biased toward basic and acidic residues. The span at 331–362 (GCPNTQYPSNGTRTATLPRTGINKSGEQSCTE) shows a compositional bias: polar residues. In terms of domain architecture, USP spans 438–744 (RGLVNCGNSC…GAYMLFYMRS (307 aa)). Cys447 serves as the catalytic Nucleophile. The active-site Proton acceptor is His703. Residues 750–793 (RGEHNGKAPVHHSQPRNEMKEQRKPVNRFKPRADHKNTESSSSE) are disordered. The span at 764–773 (PRNEMKEQRK) shows a compositional bias: basic and acidic residues.

Belongs to the peptidase C19 family. Interacts with DA1. Highly expressed in rosette leaves and inflorescence. Expressed at low levels in cotyledons, stems, cauline leaves and siliques.

The protein resides in the cytoplasm. It localises to the nucleus. It carries out the reaction Thiol-dependent hydrolysis of ester, thioester, amide, peptide and isopeptide bonds formed by the C-terminal Gly of ubiquitin (a 76-residue protein attached to proteins as an intracellular targeting signal).. Functionally, recognizes and hydrolyzes the peptide bond at the C-terminal Gly of ubiquitin. Involved in the processing of poly-ubiquitin precursors as well as that of ubiquitinated proteins. Involved in the regulation of organ size. Acts as a positive regulator of cell proliferation. Possesses deubiquitinating enzyme activity in vitro. The enzyme activity of UBP15 is required for its function in regulation of cell proliferation. Functions antagonistically in a common pathway with DA1 to regulate seed size. Acts maternally to regulate seed size by promoting cell proliferation in the integuments of ovules and developing seeds. Functions independently of DA2 and BB. This chain is Ubiquitin carboxyl-terminal hydrolase 15, found in Arabidopsis thaliana (Mouse-ear cress).